Consider the following 254-residue polypeptide: 14-3-3-like protein GF14 epsilon (254 aa).

Phosphoserine is present on residues Ser65 and Ser188.

It belongs to the 14-3-3 family. Interacts with DREB1A and DREB1B in the nucleus. Interacts with CINV1.

It is found in the nucleus. Its subcellular location is the cytoplasm. Functionally, is associated with a DNA binding complex that binds to the G box, a well-characterized cis-acting DNA regulatory element found in plant genes. This Arabidopsis thaliana (Mouse-ear cress) protein is 14-3-3-like protein GF14 epsilon (GRF10).